The sequence spans 675 residues: uncharacterized protein (675 aa).

This is an uncharacterized protein from Homo sapiens (Human).